The chain runs to 111 residues: Antirepressor protein CarS (111 aa).

In terms of assembly, monomer. Interacts with CarA and CarH.

In terms of biological role, involved in carotenoid biosynthesis. Antagonizes the transcriptional repressor proteins CarA and CarH by preventing their binding to DNA. Can also dissociate preformed CarA-DNA complexes. Does not bind DNA. The chain is Antirepressor protein CarS (carS) from Myxococcus xanthus.